A 274-amino-acid chain; its full sequence is 2,3,4,5-tetrahydropyridine-2,6-dicarboxylate N-succinyltransferase (274 aa).

Substrate is bound by residues Arg-104 and Asp-141.

This sequence belongs to the transferase hexapeptide repeat family. Homotrimer.

It localises to the cytoplasm. It carries out the reaction (S)-2,3,4,5-tetrahydrodipicolinate + succinyl-CoA + H2O = (S)-2-succinylamino-6-oxoheptanedioate + CoA. It functions in the pathway amino-acid biosynthesis; L-lysine biosynthesis via DAP pathway; LL-2,6-diaminopimelate from (S)-tetrahydrodipicolinate (succinylase route): step 1/3. This is 2,3,4,5-tetrahydropyridine-2,6-dicarboxylate N-succinyltransferase from Shewanella loihica (strain ATCC BAA-1088 / PV-4).